The following is a 778-amino-acid chain: Ribosome biogenesis protein BOP1 homolog (778 aa).

Basic residues predominate over residues 1–10 (MAKKQDRKRK). Positions 1–152 (MAKKQDRKRK…DSDTSDEEDI (152 aa)) are disordered. 3 stretches are compositionally biased toward acidic residues: residues 44-53 (EDSTDDEGID), 60-72 (SSEDLEFESDEEG), and 84-105 (SSDEEEVDEEEEDDDDDDDEEE). Positions 114–124 (TTSSKAETNNE) are enriched in polar residues. The segment covering 142–151 (EDSDTSDEED) has biased composition (acidic residues). WD repeat units lie at residues 438–479 (GHTD…RTIE), 481–519 (EDVVRCVAWCPNAKLSIIAVATGSRLLLVNPKVGDKLLI), 564–606 (NHFK…SQIP), 609–647 (KSKGLIQCVLFHPVKPCFFVATQHNIRIYDLVKQELIKK), 650–689 (TNSKWISGMSIHPKGDNLLVSTYDKKMLWFDLDLSTKPYQ), 693–732 (LHRNAVRSVAFHLRYPLFASGSDDQAVIVSHGMVYNDLLQ), and 748–778 (RDDFGVLDVCWHPVQPWVFSTGADCTIRLYT).

This sequence belongs to the WD repeat BOP1/ERB1 family.

The protein localises to the nucleus. It localises to the nucleolus. Its subcellular location is the nucleoplasm. In terms of biological role, required for maturation of ribosomal RNAs and formation of the large ribosomal subunit. In Drosophila willistoni (Fruit fly), this protein is Ribosome biogenesis protein BOP1 homolog.